The chain runs to 300 residues: Diaminopimelate epimerase (300 aa).

Substrate contacts are provided by N15, Q47, and N67. C76 acts as the Proton donor in catalysis. Substrate is bound by residues 77–78 (GN), N163, N197, and 215–216 (ER). C224 serves as the catalytic Proton acceptor. Substrate is bound at residue 225–226 (GS). The interval 275–300 (SGTFDPATGEWSRDAQNDKPTDRGAA) is disordered. A compositionally biased stretch (basic and acidic residues) spans 285-300 (WSRDAQNDKPTDRGAA).

The protein belongs to the diaminopimelate epimerase family. Homodimer.

It is found in the cytoplasm. The catalysed reaction is (2S,6S)-2,6-diaminopimelate = meso-2,6-diaminopimelate. The protein operates within amino-acid biosynthesis; L-lysine biosynthesis via DAP pathway; DL-2,6-diaminopimelate from LL-2,6-diaminopimelate: step 1/1. Catalyzes the stereoinversion of LL-2,6-diaminopimelate (L,L-DAP) to meso-diaminopimelate (meso-DAP), a precursor of L-lysine and an essential component of the bacterial peptidoglycan. This chain is Diaminopimelate epimerase, found in Brucella anthropi (strain ATCC 49188 / DSM 6882 / CCUG 24695 / JCM 21032 / LMG 3331 / NBRC 15819 / NCTC 12168 / Alc 37) (Ochrobactrum anthropi).